The following is a 248-amino-acid chain: Protein G1-like6 (248 aa).

Basic residues predominate over residues 1-15 (MDRHHHHHHHHHHHM). Disordered stretches follow at residues 1–35 (MDRH…GATQ), 50–84 (GAGS…YESQ), and 198–248 (ARGI…FIIP). Over residues 17 to 32 (SGGGQDPAAGDGGAGG) the composition is skewed to gly residues. Low complexity predominate over residues 50 to 59 (GAGSSSSGAG). Over residues 60–69 (TSAGGGGGGP) the composition is skewed to gly residues. Residues 70–79 (SPSSSSPSLS) show a composition bias toward low complexity. Positions 80-207 (RYESQKRRDW…ARGISYEKKK (128 aa)) constitute an ALOG domain. The Nuclear localization signal signature appears at 205 to 209 (KKKRK). Composition is skewed to low complexity over residues 212–224 (SSAG…SSEG) and 239–248 (TSASPQFIIP).

It belongs to the plant homeotic and developmental regulators ALOG protein family.

It localises to the nucleus. Functionally, probable transcription regulator that acts as a developmental regulator by promoting cell growth in response to light. This chain is Protein G1-like6, found in Oryza sativa subsp. indica (Rice).